Consider the following 351-residue polypeptide: Glycerol-1-phosphate dehydrogenase [NAD(P)+] (351 aa).

Residues 98-102 (GSIID) and 120-123 (TTAS) contribute to the NAD(+) site. Residue Asp125 coordinates substrate. Ser129 contributes to the NAD(+) binding site. Asp172 contacts substrate. Residues Asp172 and His252 each contribute to the Zn(2+) site. His256 is a substrate binding site. Position 268 (His268) interacts with Zn(2+).

This sequence belongs to the glycerol-1-phosphate dehydrogenase family. Requires Zn(2+) as cofactor.

It localises to the cytoplasm. The catalysed reaction is sn-glycerol 1-phosphate + NAD(+) = dihydroxyacetone phosphate + NADH + H(+). It catalyses the reaction sn-glycerol 1-phosphate + NADP(+) = dihydroxyacetone phosphate + NADPH + H(+). It functions in the pathway membrane lipid metabolism; glycerophospholipid metabolism. Functionally, catalyzes the NAD(P)H-dependent reduction of dihydroxyacetonephosphate (DHAP or glycerone phosphate) to glycerol 1-phosphate (G1P). The G1P thus generated is used as the glycerophosphate backbone of phospholipids in the cellular membranes of Archaea. The chain is Glycerol-1-phosphate dehydrogenase [NAD(P)+] from Thermococcus kodakarensis (strain ATCC BAA-918 / JCM 12380 / KOD1) (Pyrococcus kodakaraensis (strain KOD1)).